Here is a 536-residue protein sequence, read N- to C-terminus: Methyl-accepting chemotaxis aspartate transducer (536 aa).

Residues 1–10 (MFNRIRISTS) lie on the Cytoplasmic side of the membrane. Residues 11–31 (LFLLLISFCIMQLISTGLSYV) form a helical membrane-spanning segment. Residues 32–188 (ALRADNHNLE…ASSQQAYGWS (157 aa)) lie on the Periplasmic side of the membrane. Residues 64–73 (RNTLNRAGTR) form a the 3 Arg may form a positively charged pocket, which binds the alpha-carboxyl group of the attractant AA region. Residues 189 to 209 (IWLVAGAVLMLLVVTLSAMWW) traverse the membrane as a helical segment. Residues 210–536 (LRTMLVQPLN…VKETLDCQTA (327 aa)) are Cytoplasmic-facing. In terms of domain architecture, HAMP spans 212–264 (TMLVQPLNIIRGHFERIASGDLSAPIEVYGRNEISQLFASLQRMQQSLIGTVG). A Methyl-accepting transducer domain is found at 269 to 498 (GAESILIGLQ…ESASAAAALE (230 aa)). The residue at position 293 (Gln293) is a Glutamate methyl ester (Gln). Glutamate methyl ester (Glu) is present on Glu300. Gln307 bears the Glutamate methyl ester (Gln) mark. Residues Glu489 and Glu498 each carry the glutamate methyl ester (Glu) modification.

Belongs to the methyl-accepting chemotaxis (MCP) protein family.

Its subcellular location is the cell inner membrane. Functionally, this protein responds to changes in Asp concentration in the environment, transduces a signal from the outside to the inside of the cell, and facilitates sensory adaptation through various levels of methylation. In terms of biological role, chemotactic-signal transducers respond to changes in the concentration of attractants and repellents in the environment, transduce a signal from the outside to the inside of the cell, and facilitate sensory adaptation through the variation of the level of methylation. Attractants increase the level of methylation while repellents decrease the level of methylation, the methyl groups are added by the methyltransferase CheR and removed by the methylesterase CheB. The chain is Methyl-accepting chemotaxis aspartate transducer (tas) from Klebsiella aerogenes (strain ATCC 13048 / DSM 30053 / CCUG 1429 / JCM 1235 / KCTC 2190 / NBRC 13534 / NCIMB 10102 / NCTC 10006 / CDC 819-56) (Enterobacter aerogenes).